Reading from the N-terminus, the 79-residue chain is Large ribosomal subunit protein uL22 (79 aa).

The protein belongs to the universal ribosomal protein uL22 family. As to quaternary structure, part of the 50S ribosomal subunit.

Functionally, this protein binds specifically to 23S rRNA; its binding is stimulated by other ribosomal proteins, e.g. L4, L17, and L20. It is important during the early stages of 50S assembly. It makes multiple contacts with different domains of the 23S rRNA in the assembled 50S subunit and ribosome. Its function is as follows. The globular domain of the protein is located near the polypeptide exit tunnel on the outside of the subunit, while an extended beta-hairpin is found that lines the wall of the exit tunnel in the center of the 70S ribosome. This is Large ribosomal subunit protein uL22 (rplV) from Prunus armeniaca phytoplasma.